The chain runs to 224 residues: Ribose-5-phosphate isomerase A (224 aa).

Residues 26 to 29 (TGST), 82 to 85 (DGAD), and 95 to 98 (KGGG) contribute to the substrate site. Glu-104 functions as the Proton acceptor in the catalytic mechanism. Lys-122 provides a ligand contact to substrate.

This sequence belongs to the ribose 5-phosphate isomerase family. Homodimer.

It catalyses the reaction aldehydo-D-ribose 5-phosphate = D-ribulose 5-phosphate. It participates in carbohydrate degradation; pentose phosphate pathway; D-ribose 5-phosphate from D-ribulose 5-phosphate (non-oxidative stage): step 1/1. In terms of biological role, catalyzes the reversible conversion of ribose-5-phosphate to ribulose 5-phosphate. This Lactococcus lactis subsp. cremoris (strain SK11) protein is Ribose-5-phosphate isomerase A.